A 609-amino-acid polypeptide reads, in one-letter code: Major facilitator superfamily domain-containing protein 6-like protein A (609 aa).

The next 2 helical transmembrane spans lie at 41-61 and 78-98; these read LGLGAPLVGIIFGFKHAVHLL and FFIMTSLLLSAGVGSLFAYYP. The segment at 201–241 is disordered; sequence SGKAQKVMSSKSAASNSKQRSSLNNHTSPYATHPNVSHHPS. Positions 207 to 230 are enriched in polar residues; the sequence is VMSSKSAASNSKQRSSLNNHTSPY. 9 consecutive transmembrane segments (helical) span residues 265–285, 307–327, 340–360, 388–408, 420–440, 452–472, 475–495, 513–535, and 541–561; these read IFLIVLVLVIIWEILAAPLEW, LWIWGYLGASMGSIFITFLVD, VFFHFFCYGGFLIGTLFLSTL, IVLTALTVFLLGAVGSTTQNF, ELYMGLSIAVGLLSELTLYFF, WMVALGLFSLGVQCLYYSFLW, WSVLAIQILNAFSSGVIWWAI, LALRWLAYGCGSSTGSFASGFII, and AVLYQACCITLLLWIIIFLLV.

Belongs to the major facilitator superfamily. MFSD6 family.

It is found in the membrane. The polypeptide is Major facilitator superfamily domain-containing protein 6-like protein A (mfsd6l-a) (Xenopus laevis (African clawed frog)).